Consider the following 432-residue polypeptide: Adenylosuccinate synthetase (432 aa).

Residues Gly-13–Lys-19 and Gly-41–Thr-43 contribute to the GTP site. Catalysis depends on Asp-14, which acts as the Proton acceptor. Residues Asp-14 and Gly-41 each contribute to the Mg(2+) site. IMP-binding positions include Asp-14 to Lys-17, Asn-39 to His-42, Thr-131, Arg-145, Gln-226, Thr-241, and Arg-305. The active-site Proton donor is His-42. Ser-301 to Arg-307 is a substrate binding site. Residues Arg-307, Lys-333–Asp-335, and Ser-416–Gly-418 each bind GTP.

The protein belongs to the adenylosuccinate synthetase family. As to quaternary structure, homodimer. Mg(2+) serves as cofactor.

The protein resides in the cytoplasm. It catalyses the reaction IMP + L-aspartate + GTP = N(6)-(1,2-dicarboxyethyl)-AMP + GDP + phosphate + 2 H(+). Its pathway is purine metabolism; AMP biosynthesis via de novo pathway; AMP from IMP: step 1/2. Functionally, plays an important role in the de novo pathway of purine nucleotide biosynthesis. Catalyzes the first committed step in the biosynthesis of AMP from IMP. The polypeptide is Adenylosuccinate synthetase (Neisseria meningitidis serogroup C (strain 053442)).